Reading from the N-terminus, the 721-residue chain is Polyribonucleotide nucleotidyltransferase (721 aa).

2 residues coordinate Mg(2+): aspartate 495 and aspartate 501. The region spanning 562–621 (PRLLSFRIDPELIGTVIGPGGRTIKGITERTNTKIDIEDGGIVTIASHDGAAAEEAQKII) is the KH domain. In terms of domain architecture, S1 motif spans 631–699 (GEIFTGVVTR…SRGRINLTLR (69 aa)). Residues 702-721 (SQNSGMSYPEPTPTPVAPLN) are disordered. The segment covering 711–721 (EPTPTPVAPLN) has biased composition (pro residues).

Belongs to the polyribonucleotide nucleotidyltransferase family. The cofactor is Mg(2+).

Its subcellular location is the cytoplasm. It carries out the reaction RNA(n+1) + phosphate = RNA(n) + a ribonucleoside 5'-diphosphate. In terms of biological role, involved in mRNA degradation. Catalyzes the phosphorolysis of single-stranded polyribonucleotides processively in the 3'- to 5'-direction. The polypeptide is Polyribonucleotide nucleotidyltransferase (Prochlorococcus marinus (strain MIT 9312)).